A 506-amino-acid polypeptide reads, in one-letter code: Exopolysaccharide phosphotransferase NFA_48680 (506 aa).

Residues 484 to 506 (PAPWERVSAPSRRPLPESTAGAA) are disordered.

This sequence belongs to the stealth family.

The chain is Exopolysaccharide phosphotransferase NFA_48680 from Nocardia farcinica (strain IFM 10152).